Here is a 183-residue protein sequence, read N- to C-terminus: Inosine/xanthosine triphosphatase (183 aa).

Asp75 contacts Mg(2+). 75–76 (DG) is a substrate binding site.

Belongs to the YjjX NTPase family. In terms of assembly, homodimer. Requires Mg(2+) as cofactor. The cofactor is Mn(2+).

The enzyme catalyses XTP + H2O = XDP + phosphate + H(+). It carries out the reaction ITP + H2O = IDP + phosphate + H(+). In terms of biological role, phosphatase that hydrolyzes non-canonical purine nucleotides such as XTP and ITP to their respective diphosphate derivatives. Probably excludes non-canonical purines from DNA/RNA precursor pool, thus preventing their incorporation into DNA/RNA and avoiding chromosomal lesions. This is Inosine/xanthosine triphosphatase from Vibrio vulnificus (strain CMCP6).